A 470-amino-acid chain; its full sequence is Proline--tRNA ligase (470 aa).

It belongs to the class-II aminoacyl-tRNA synthetase family. ProS type 3 subfamily. In terms of assembly, homodimer.

It is found in the cytoplasm. The catalysed reaction is tRNA(Pro) + L-proline + ATP = L-prolyl-tRNA(Pro) + AMP + diphosphate. Its function is as follows. Catalyzes the attachment of proline to tRNA(Pro) in a two-step reaction: proline is first activated by ATP to form Pro-AMP and then transferred to the acceptor end of tRNA(Pro). In Malacoplasma penetrans (strain HF-2) (Mycoplasma penetrans), this protein is Proline--tRNA ligase.